A 117-amino-acid polypeptide reads, in one-letter code: Ubiquitin-like protein 3 (117 aa).

The region spanning isoleucine 10 to leucine 88 is the Ubiquitin-like domain. The S-palmitoyl cysteine moiety is linked to residue cysteine 113. At cysteine 114 the chain carries Cysteine methyl ester. Residue cysteine 114 is the site of S-geranylgeranyl cysteine attachment. Positions valine 115–leucine 117 are cleaved as a propeptide — removed in mature form.

The protein resides in the cell membrane. The sequence is that of Ubiquitin-like protein 3 (UBL3) from Bos taurus (Bovine).